Consider the following 145-residue polypeptide: Alpha-amylase/trypsin inhibitor CMa (145 aa).

Residues 1–25 (MASKSSITPLLLAAVLASVFAAATA) form the signal peptide.

The protein belongs to the protease inhibitor I6 (cereal trypsin/alpha-amylase inhibitor) family. As to quaternary structure, heterotetramer of one CMa, one CMb and two CMd chains. Post-translationally, five disulfide bonds, which are essential for the inhibitor activity, are probably present. Endosperm.

The protein localises to the secreted. Functionally, alpha-amylase/trypsin inhibitor. It could be involved in insect defense mechanisms. This Hordeum vulgare (Barley) protein is Alpha-amylase/trypsin inhibitor CMa (IAT1).